The chain runs to 260 residues: Fibronectin type III domain-containing protein 5 (260 aa).

The interval 1–56 is disordered; it reads MQAARGGAGRPERPGRPGRGPERERERPPGAGAASPCAAPGLPAGGATIHPGSPSA. Residues 10 to 28 show a composition bias toward basic and acidic residues; sequence RPERPGRPGRGPERERERP. A compositionally biased stretch (low complexity) spans 29 to 56; sequence PGAGAASPCAAPGLPAGGATIHPGSPSA. The Fibronectin type-III domain occupies 84–175; the sequence is APVNVTVRHL…EPVLFKTPRE (92 aa). N-linked (GlcNAc...) asparagine glycosylation is found at N87 and N132. A helical membrane pass occupies residues 201–221; sequence GEVLIIVVVLFMWAGVIALFC. Positions 230 to 241 are enriched in basic and acidic residues; it reads NEPNNNKEKTKS. Residues 230–260 are disordered; it reads NEPNNNKEKTKSASETSTPEHQGGGLLRSKI. Residues 251–260 show a composition bias toward gly residues; that stretch reads QGGGLLRSKI. The short motif at 258–260 is the Microbody targeting signal element; it reads SKI.

In terms of assembly, dimer; may exist in other oligomeric forms. The extracellular domain is cleaved and released from the cell membrane. In terms of processing, N-Glycosylated. Widely expressed, with highest levels in heart. Very low expression, if any, in colon, pancreas and spleen.

It is found in the cell membrane. The protein localises to the peroxisome membrane. It localises to the secreted. Functionally, mediates beneficial effects of muscular exercise. Induces browning of white adipose tissue by stimulating UCP1 expression, at least in part, via the nuclear receptor PPARA. This chain is Fibronectin type III domain-containing protein 5 (FNDC5), found in Homo sapiens (Human).